The primary structure comprises 221 residues: 7-cyano-7-deazaguanine synthase (221 aa).

8–18 (LSGGMDSAAVI) is a binding site for ATP. Cys-186, Cys-196, Cys-199, and Cys-202 together coordinate Zn(2+).

Belongs to the QueC family. Zn(2+) serves as cofactor.

It catalyses the reaction 7-carboxy-7-deazaguanine + NH4(+) + ATP = 7-cyano-7-deazaguanine + ADP + phosphate + H2O + H(+). It participates in purine metabolism; 7-cyano-7-deazaguanine biosynthesis. Functionally, catalyzes the ATP-dependent conversion of 7-carboxy-7-deazaguanine (CDG) to 7-cyano-7-deazaguanine (preQ(0)). In Stenotrophomonas maltophilia (strain R551-3), this protein is 7-cyano-7-deazaguanine synthase.